The sequence spans 361 residues: DNA double-strand break repair protein Mre11 (361 aa).

Residues aspartate 7, histidine 9, aspartate 48, and asparagine 83 each contribute to the Mn(2+) site. Histidine 84 functions as the Proton donor in the catalytic mechanism. Positions 176, 204, and 206 each coordinate Mn(2+).

It belongs to the MRE11/RAD32 family. Homodimer. Forms a heterotetramer composed of two Mre11 subunits and two Rad50 subunits. The cofactor is Mn(2+).

With respect to regulation, nuclease activity is regulated by Rad50. Part of the Rad50/Mre11 complex, which is involved in the early steps of DNA double-strand break (DSB) repair. The complex may facilitate opening of the processed DNA ends to aid in the recruitment of HerA and NurA. Mre11 binds to DSB ends and has both double-stranded 3'-5' exonuclease activity and single-stranded endonuclease activity. The chain is DNA double-strand break repair protein Mre11 from Nanoarchaeum equitans (strain Kin4-M).